Consider the following 300-residue polypeptide: Acetylglutamate kinase (300 aa).

Residues 72 to 73 (GG), arginine 94, and asparagine 197 each bind substrate.

This sequence belongs to the acetylglutamate kinase family. ArgB subfamily.

The protein localises to the cytoplasm. The catalysed reaction is N-acetyl-L-glutamate + ATP = N-acetyl-L-glutamyl 5-phosphate + ADP. The protein operates within amino-acid biosynthesis; L-arginine biosynthesis; N(2)-acetyl-L-ornithine from L-glutamate: step 2/4. In terms of biological role, catalyzes the ATP-dependent phosphorylation of N-acetyl-L-glutamate. This chain is Acetylglutamate kinase, found in Azoarcus sp. (strain BH72).